The primary structure comprises 880 residues: Translation initiation factor IF-2 (880 aa).

2 stretches are compositionally biased toward basic and acidic residues: residues 180-194 (QEAA…EAAK) and 202-228 (LAEE…DHHI). The segment at 180 to 289 (QEAATKRKQD…APESMAHGFN (110 aa)) is disordered. Residues 249–262 (GRRARNKSNAKKRG) show a composition bias toward basic residues. Residues 380-549 (SRAPVVTIMG…LLQAEVLELK (170 aa)) enclose the tr-type G domain. The G1 stretch occupies residues 389 to 396 (GHVDHGKT). Residue 389–396 (GHVDHGKT) participates in GTP binding. The interval 414–418 (GITQH) is G2. The G3 stretch occupies residues 435–438 (DTPG). Residues 435 to 439 (DTPGH) and 489 to 492 (NKMD) each bind GTP. Residues 489-492 (NKMD) are G4. Residues 525–527 (SAK) are G5.

Belongs to the TRAFAC class translation factor GTPase superfamily. Classic translation factor GTPase family. IF-2 subfamily.

Its subcellular location is the cytoplasm. Functionally, one of the essential components for the initiation of protein synthesis. Protects formylmethionyl-tRNA from spontaneous hydrolysis and promotes its binding to the 30S ribosomal subunits. Also involved in the hydrolysis of GTP during the formation of the 70S ribosomal complex. The chain is Translation initiation factor IF-2 from Shewanella baltica (strain OS223).